A 176-amino-acid polypeptide reads, in one-letter code: Oleosin Ara h 14.0101 (176 aa).

Alanine 2 bears the N-acetylalanine; alternate mark. Transmembrane regions (helical) follow at residues 50 to 80 (IIAV…GLAI) and 95 to 117 (AVVT…LTGL). The tract at residues 157–176 (TKDAGQQIQTKAQDVKRSSS) is disordered.

This sequence belongs to the oleosin family. As to quaternary structure, homodimer. Forms oligomers. Expressed in seeds (at protein level). Not expressed in leaves.

The protein localises to the lipid droplet. The protein resides in the membrane. Its function is as follows. May have a structural role to stabilize the lipid body during desiccation of the seed by preventing coalescence of the oil. Probably interacts with both lipid and phospholipid moieties of lipid bodies. May also provide recognition signals for specific lipase anchorage in lipolysis during seedling growth. This Arachis hypogaea (Peanut) protein is Oleosin Ara h 14.0101.